We begin with the raw amino-acid sequence, 646 residues long: Ribonuclease Y (646 aa).

A helical membrane pass occupies residues 4–24 (VLVVLLSLVLVVLSVLILAVA). 2 disordered regions span residues 43-62 (PRTP…DFDE) and 69-118 (LPAP…HGGS). The region spanning 336–402 (VVTVLHLPGD…RITLAALVSD (67 aa)) is the KH domain. An HD domain is found at 462–555 (VLAHLIESAH…TQAADQISGG (94 aa)).

Belongs to the RNase Y family.

Its subcellular location is the cell membrane. In terms of biological role, endoribonuclease that initiates mRNA decay. The protein is Ribonuclease Y of Frankia casuarinae (strain DSM 45818 / CECT 9043 / HFP020203 / CcI3).